The chain runs to 1085 residues: Solute carrier family 12 member 4 (1085 aa).

Over 1–119 (MPHFTVVPVD…RRAAKAPSMG (119 aa)) the chain is Cytoplasmic. A phosphoserine mark is found at Ser24, Ser47, Ser81, and Ser88. A discontinuously helical membrane pass occupies residues 120-141 (TLMGVYLPCLQNIFGVILFLRL). K(+)-binding residues include Asn131 and Ile132. Over 142 to 149 (TWMVGTAG) the chain is Extracellular. The chain crosses the membrane as a helical span at residues 150–172 (VLQALLIVLICCCCTLLTAISMS). Residues 173-196 (AIATNGVVPAGGSYFMISRSLGPE) are Cytoplasmic-facing. A helical membrane pass occupies residues 197 to 225 (FGGAVGLCFYLGTTFAAAMYILGAIEILL). Residue Tyr216 participates in K(+) binding. The Extracellular portion of the chain corresponds to 226–248 (TYIAPPAAIFYPSGTHDMSSATL). 2 helical membrane passes run 249 to 271 (NNMRVYGTIFLTLMTLVVFVGVK) and 272 to 297 (YVNKFASLFLACVIISILSIYAGGIK). At 298-419 (SIFDPPVFPV…LYVVADIATS (122 aa)) the chain is on the extracellular side. Cys308 and Cys323 are disulfide-bonded. 3 N-linked (GlcNAc...) asparagine glycosylation sites follow: Asn312, Asn331, and Asn347. The cysteines at positions 343 and 353 are disulfide-linked. A helical transmembrane segment spans residues 420–440 (FTVLVGIFFPSVTGIMAGSNR). Residues Pro429 and Thr432 each contribute to the K(+) site. 3 residues coordinate chloride: Gly433, Ile434, and Met435. Topologically, residues 441-450 (SGDLRDAQKS) are cytoplasmic. Residues 451-473 (IPVGTILAIVTTSLVYFSSVILF) form a helical membrane-spanning segment. Topologically, residues 474–504 (GACIEGVVLRDKYGDGVSRNLVVGTLAWPSP) are extracellular. The chain crosses the membrane as a helical span at residues 505–531 (WVIVVGSFFSTCGAGLQSLTGAPRLLQ). Topologically, residues 532–554 (AIAKDNIIPFLRVFGHGKANGEP) are cytoplasmic. 2 consecutive transmembrane segments (helical) span residues 555–575 (TWALLLTALIAELGILIASLD) and 576–598 (MVAPILSMFFLMCYLFVNLACAV). Position 589 (Tyr589) interacts with chloride. Topologically, residues 599 to 612 (QTLLRTPNWRPRFK) are cytoplasmic. A run of 2 helical transmembrane segments spans residues 613-635 (YYHWTLSFLGMSLCLALMFVSSW) and 636-651 (YYALVAMLIAGMIYKY). Residues 652–1085 (IEYQGAEKEW…GGREVITIYS (434 aa)) are Cytoplasmic-facing. Residues 665 to 681 (IRGLSLSAARYALLRLE) are scissor helix. Leu697, Lys699, Lys707, Tyr708, and Val730 together coordinate ATP. A Phosphoserine modification is found at Ser734. The ATP site is built by Gly794, Trp795, and Tyr797. A phosphoserine mark is found at Ser916 and Ser967. Position 983 is a phosphothreonine (Thr983). Position 1050 is a phosphoserine (Ser1050).

It belongs to the SLC12A transporter family. K/Cl co-transporter subfamily. In terms of assembly, homodimer; adopts a domain-swap conformation at the scissor helices connecting the transmembrane domain and C-terminal domain. Heterodimer with other K-Cl cotransporters. Post-translationally, phosphorylated, phosphorylation may regulate transporter activity. Detected in embryo, adult heart, erythrocytes, brain, kidney, stomach, ovary, testis and liver.

It is found in the cell membrane. The catalysed reaction is K(+)(in) + chloride(in) = K(+)(out) + chloride(out). Inhibited by WNK3. Its function is as follows. Mediates electroneutral potassium-chloride cotransport when activated by cell swelling. May contribute to cell volume homeostasis in single cells. May be involved in the regulation of basolateral Cl(-) exit in NaCl absorbing epithelia. The polypeptide is Solute carrier family 12 member 4 (Slc12a4) (Mus musculus (Mouse)).